Consider the following 140-residue polypeptide: MHYTNHTKTLKARLFSQRLKTFNKGICRMISRDHSCTLTRSCMKRPIYPRQFFLVLLGETFSLQNSIRHHKNICFKNLNINEFYFFIFISWVTPLVNDASCFFFSSNIRYSALVCSNNYDVKVLETLTKKPLFKRKVLQI.

This is an uncharacterized protein from Saccharomyces cerevisiae (strain ATCC 204508 / S288c) (Baker's yeast).